The following is a 184-amino-acid chain: Lysozyme 1 (184 aa).

An N-terminal signal peptide occupies residues Met1–Gly20. An I-type lysozyme domain is found at Thr69 to Asn184. 6 disulfide bridges follow: Cys76–Cys152, Cys81–Cys87, Cys92–Cys101, Cys114–Cys134, Cys124–Cys130, and Cys148–Cys166. Glu84 functions as the Proton donor in the catalytic mechanism. Asp95 acts as the Nucleophile in catalysis. Position 107 to 113 (Lys107 to Asp113) interacts with substrate. Substrate contacts are provided by residues Tyr138 and His159–Gly161.

Hemolymph, labial palps, non-vesiculated cells of mantle connective tissue, cells of interlamellar junctions and epithelia surrounding the water tubes of the gills.

It is found in the secreted. It carries out the reaction Hydrolysis of (1-&gt;4)-beta-linkages between N-acetylmuramic acid and N-acetyl-D-glucosamine residues in a peptidoglycan and between N-acetyl-D-glucosamine residues in chitodextrins.. Its function is as follows. Has antibacterial activity against the Gram-positive bacteria L.garvieae, M.luteus and Enterococcus sp., and the Gram-negative bacteria E.coli and V.vulnificus. Weak antibacterial activity against the Gram-negative bacterium A.hydrophila. No antibacterial activity detected against the Gram-positive bacterium S.iniae or against the Gram-negative bacterium E.ictaluri. Shows some chitinase activity but no isopeptidase activity. The sequence is that of Lysozyme 1 from Crassostrea virginica (Eastern oyster).